The primary structure comprises 55 residues: Large ribosomal subunit protein bL33 (55 aa).

It belongs to the bacterial ribosomal protein bL33 family.

The protein is Large ribosomal subunit protein bL33 of Bartonella bacilliformis (strain ATCC 35685 / KC583 / Herrer 020/F12,63).